Consider the following 242-residue polypeptide: Uridylate kinase (242 aa).

15–18 (KLSG) is an ATP binding site. The interval 23–28 (GDEGFG) is involved in allosteric activation by GTP. Gly-57 provides a ligand contact to UMP. ATP contacts are provided by Gly-58 and Arg-62. UMP is bound by residues Asp-77 and 138–145 (TGNPFCTT). Thr-165, Tyr-171, and Asp-174 together coordinate ATP.

Belongs to the UMP kinase family. As to quaternary structure, homohexamer.

Its subcellular location is the cytoplasm. It carries out the reaction UMP + ATP = UDP + ADP. It participates in pyrimidine metabolism; CTP biosynthesis via de novo pathway; UDP from UMP (UMPK route): step 1/1. Allosterically activated by GTP. Inhibited by UTP. In terms of biological role, catalyzes the reversible phosphorylation of UMP to UDP. The chain is Uridylate kinase from Shewanella sp. (strain ANA-3).